Consider the following 338-residue polypeptide: Lipoate-protein ligase A (338 aa).

The BPL/LPL catalytic domain occupies 29–216 (PATQRVLFLW…AFFAHYGEHV (188 aa)). Residues Arg-71, 76-79 (GAVF), and Lys-134 contribute to the ATP site. Lys-134 contacts (R)-lipoate.

Belongs to the LplA family. Monomer.

It is found in the cytoplasm. The catalysed reaction is L-lysyl-[lipoyl-carrier protein] + (R)-lipoate + ATP = N(6)-[(R)-lipoyl]-L-lysyl-[lipoyl-carrier protein] + AMP + diphosphate + H(+). It participates in protein modification; protein lipoylation via exogenous pathway; protein N(6)-(lipoyl)lysine from lipoate: step 1/2. It functions in the pathway protein modification; protein lipoylation via exogenous pathway; protein N(6)-(lipoyl)lysine from lipoate: step 2/2. In terms of biological role, catalyzes both the ATP-dependent activation of exogenously supplied lipoate to lipoyl-AMP and the transfer of the activated lipoyl onto the lipoyl domains of lipoate-dependent enzymes. The sequence is that of Lipoate-protein ligase A from Escherichia coli O17:K52:H18 (strain UMN026 / ExPEC).